The chain runs to 262 residues: Spindlin-1 (262 aa).

The segment at methionine 1 to proline 49 is disordered. Glycyl lysine isopeptide (Lys-Gly) (interchain with G-Cter in SUMO2) cross-links involve residues lysine 7 and lysine 28. Over residues methionine 27–threonine 38 the composition is skewed to basic residues. Lysine 44 bears the N6-acetyllysine; alternate mark. A Glycyl lysine isopeptide (Lys-Gly) (interchain with G-Cter in SUMO2); alternate cross-link involves residue lysine 44. The interval isoleucine 53 to aspartate 116 is tudor-like domain 1. The interval glycine 93 to tyrosine 98 is histone H3K4me3 and H3R8me2a binding. Residues serine 109 and serine 124 each carry the phosphoserine; by AURKA modification. The tract at residues methionine 132–methionine 193 is tudor-like domain 2. Residue glutamate 142 is a region of interest, histone H3K4me3 and H3R8me2a binding. Serine 199 is subject to Phosphoserine. The segment at leucine 213–serine 262 is tudor-like domain 3. Positions aspartate 250–histidine 252 are histone H3K4me3 and H3R8me2a binding.

The protein belongs to the SPIN/STSY family. As to quaternary structure, homodimer; may form higher-order oligomers. Interacts with TCF7L2/TCF4; the interaction is direct. Interacts with HABP4 and SERBP1. Interacts with SPINDOC; SPINDOC stabilizes SPIN1 and enhances its association with bivalent H3K4me3K9me3 mark. Interacts with SPOCD1; promoting recruitment of PIWIL4 and SPOCD1 to transposons. In terms of processing, phosphorylated during oocyte meiotic maturation.

The protein resides in the nucleus. The protein localises to the nucleolus. Chromatin reader that specifically recognizes and binds histone H3 both trimethylated at 'Lys-4' and 'Lys-9' (H3K4me3K9me3) and is involved in piRNA-mediated retrotransposon silencing during spermatogenesis. Plays a key role in the initiation of the PIWIL4-piRNA pathway, a pathway that directs transposon DNA methylation and silencing in the male embryonic germ cells, by promoting recruitment of DNA methylation machinery to transposons: binds young, but not old, LINE1 transposons, which are specifically marked with H3K4me3K9me3, and promotes the recruitment of PIWIL4 and SPOCD1 to transposons, leading to piRNA-directed DNA methylation. Also recognizes and binds histone H3 both trimethylated at 'Lys-4' and asymmetrically dimethylated at 'Arg-8' (H3K4me3 and H3R8me2a) and acts as an activator of Wnt signaling pathway downstream of PRMT2. Overexpression induces metaphase arrest and chromosomal instability. Overexpression induces metaphase arrest and chromosomal instability. Localizes to active rDNA loci and promotes the expression of rRNA genes. May play a role in cell-cycle regulation during the transition from gamete to embryo. Involved in oocyte meiotic resumption, a process that takes place before ovulation to resume meiosis of oocytes blocked in prophase I: may act by regulating maternal transcripts to control meiotic resumption. The polypeptide is Spindlin-1 (Spin1) (Rattus norvegicus (Rat)).